Reading from the N-terminus, the 283-residue chain is Hydrogenase expression/formation protein HoxQ (283 aa).

Positions 1–29 are disordered; it reads MNDDLPILPPGFGPGSHGEEERPDCPSMP.

Belongs to the HupH/HyaF family.

This is Hydrogenase expression/formation protein HoxQ (hoxQ) from Azotobacter vinelandii.